We begin with the raw amino-acid sequence, 235 residues long: Aspartate/glutamate leucyltransferase (235 aa).

Belongs to the R-transferase family. Bpt subfamily.

It is found in the cytoplasm. The catalysed reaction is N-terminal L-glutamyl-[protein] + L-leucyl-tRNA(Leu) = N-terminal L-leucyl-L-glutamyl-[protein] + tRNA(Leu) + H(+). It carries out the reaction N-terminal L-aspartyl-[protein] + L-leucyl-tRNA(Leu) = N-terminal L-leucyl-L-aspartyl-[protein] + tRNA(Leu) + H(+). Its function is as follows. Functions in the N-end rule pathway of protein degradation where it conjugates Leu from its aminoacyl-tRNA to the N-termini of proteins containing an N-terminal aspartate or glutamate. The polypeptide is Aspartate/glutamate leucyltransferase (Pseudomonas putida (strain GB-1)).